A 255-amino-acid chain; its full sequence is Geranylgeranylglyceryl phosphate synthase (255 aa).

Positions 34 and 64 each coordinate Mg(2+). Sn-glycerol 1-phosphate is bound by residues 182–188 (YLEAGSG), 213–214 (GG), and 235–236 (GN).

The protein belongs to the GGGP/HepGP synthase family. Group II subfamily. Requires Mg(2+) as cofactor.

Its subcellular location is the cytoplasm. The enzyme catalyses sn-glycerol 1-phosphate + (2E,6E,10E)-geranylgeranyl diphosphate = sn-3-O-(geranylgeranyl)glycerol 1-phosphate + diphosphate. The protein operates within membrane lipid metabolism; glycerophospholipid metabolism. Prenyltransferase that catalyzes the transfer of the geranylgeranyl moiety of geranylgeranyl diphosphate (GGPP) to the C3 hydroxyl of sn-glycerol-1-phosphate (G1P). This reaction is the first ether-bond-formation step in the biosynthesis of archaeal membrane lipids. The polypeptide is Geranylgeranylglyceryl phosphate synthase (Saccharolobus islandicus (strain M.14.25 / Kamchatka #1) (Sulfolobus islandicus)).